The sequence spans 540 residues: Glucose-6-phosphate isomerase (540 aa).

Glutamate 350 functions as the Proton donor in the catalytic mechanism. Residues histidine 381 and lysine 503 contribute to the active site.

It belongs to the GPI family.

Its subcellular location is the cytoplasm. The enzyme catalyses alpha-D-glucose 6-phosphate = beta-D-fructose 6-phosphate. It functions in the pathway carbohydrate biosynthesis; gluconeogenesis. It participates in carbohydrate degradation; glycolysis; D-glyceraldehyde 3-phosphate and glycerone phosphate from D-glucose: step 2/4. Its function is as follows. Catalyzes the reversible isomerization of glucose-6-phosphate to fructose-6-phosphate. In Burkholderia pseudomallei (strain 1106a), this protein is Glucose-6-phosphate isomerase.